A 122-amino-acid chain; its full sequence is Large ribosomal subunit protein uL14c (122 aa).

It belongs to the universal ribosomal protein uL14 family. In terms of assembly, part of the 50S ribosomal subunit.

It is found in the plastid. It localises to the chloroplast. In terms of biological role, binds to 23S rRNA. In Morus indica (Mulberry), this protein is Large ribosomal subunit protein uL14c.